The chain runs to 457 residues: Argininosuccinate lyase (457 aa).

Belongs to the lyase 1 family. Argininosuccinate lyase subfamily.

Its subcellular location is the cytoplasm. The enzyme catalyses 2-(N(omega)-L-arginino)succinate = fumarate + L-arginine. The protein operates within amino-acid biosynthesis; L-arginine biosynthesis; L-arginine from L-ornithine and carbamoyl phosphate: step 3/3. The protein is Argininosuccinate lyase of Shigella boydii serotype 18 (strain CDC 3083-94 / BS512).